Reading from the N-terminus, the 185-residue chain is Elongation factor P (185 aa).

This sequence belongs to the elongation factor P family.

The protein resides in the cytoplasm. It functions in the pathway protein biosynthesis; polypeptide chain elongation. Its function is as follows. Involved in peptide bond synthesis. Stimulates efficient translation and peptide-bond synthesis on native or reconstituted 70S ribosomes in vitro. Probably functions indirectly by altering the affinity of the ribosome for aminoacyl-tRNA, thus increasing their reactivity as acceptors for peptidyl transferase. In Bacillus cereus (strain G9842), this protein is Elongation factor P.